Here is a 214-residue protein sequence, read N- to C-terminus: tRNA (guanine-N(7)-)-methyltransferase (214 aa).

Residues Glu44, Glu69, Asp96, and Asp118 each contribute to the S-adenosyl-L-methionine site. Residue Asp118 is part of the active site. Substrate is bound by residues Lys122, Asp154, and 191-194; that span reads TEYE.

This sequence belongs to the class I-like SAM-binding methyltransferase superfamily. TrmB family.

It catalyses the reaction guanosine(46) in tRNA + S-adenosyl-L-methionine = N(7)-methylguanosine(46) in tRNA + S-adenosyl-L-homocysteine. It functions in the pathway tRNA modification; N(7)-methylguanine-tRNA biosynthesis. Functionally, catalyzes the formation of N(7)-methylguanine at position 46 (m7G46) in tRNA. This chain is tRNA (guanine-N(7)-)-methyltransferase, found in Listeria monocytogenes serotype 4b (strain F2365).